Here is a 245-residue protein sequence, read N- to C-terminus: MFKATIDAYLLKDSIETLSVLVDEARFRISPEGVVVRAVDPANVAMVSFDLTPEAFDDFEANDCELGLDLSRINDILGVADRDDKVQMELDEESKKLKIQIGGFSYTISLLDPSTIRAEPRIPQLELPAEIVLNGKDLQKAVKAAEKISDHMLLGVEGESFFMEAEGDTDRVKLTMTRDQLIDIKPSQVRSLFSLDYLSDIIKPASKSNEISLHLGNDFPIKINFSIANGKGTIGYLLAPRIESD.

Belongs to the PCNA family. In terms of assembly, homotrimer. The subunits circularize to form a toroid; DNA passes through its center. Replication factor C (RFC) is required to load the toroid on the DNA.

Sliding clamp subunit that acts as a moving platform for DNA processing. Responsible for tethering the catalytic subunit of DNA polymerase and other proteins to DNA during high-speed replication. The protein is DNA polymerase sliding clamp of Methanococcoides burtonii (strain DSM 6242 / NBRC 107633 / OCM 468 / ACE-M).